The sequence spans 408 residues: Serine/threonine transporter SstT (408 aa).

The next 9 membrane-spanning stretches (helical) occupy residues 19–39 (SLVS…VISP), 48–68 (LGSL…LVLV), 86–106 (IVGL…LLSF), 143–163 (VTAV…GLGF), 193–213 (FAPL…GFSA), 223–243 (VLLS…VFII), 294–314 (IPLG…VLTL), 322–342 (IEVS…SACG), and 367–387 (VAMQ…SAET).

It belongs to the dicarboxylate/amino acid:cation symporter (DAACS) (TC 2.A.23) family.

The protein localises to the cell inner membrane. It catalyses the reaction L-serine(in) + Na(+)(in) = L-serine(out) + Na(+)(out). The catalysed reaction is L-threonine(in) + Na(+)(in) = L-threonine(out) + Na(+)(out). In terms of biological role, involved in the import of serine and threonine into the cell, with the concomitant import of sodium (symport system). The sequence is that of Serine/threonine transporter SstT from Colwellia psychrerythraea (strain 34H / ATCC BAA-681) (Vibrio psychroerythus).